The sequence spans 387 residues: 3-ketoacyl-CoA thiolase (387 aa).

The active-site Acyl-thioester intermediate is cysteine 91. Catalysis depends on proton acceptor residues histidine 343 and cysteine 373.

The protein belongs to the thiolase-like superfamily. Thiolase family. Heterotetramer of two alpha chains (FadB) and two beta chains (FadA).

It localises to the cytoplasm. The catalysed reaction is an acyl-CoA + acetyl-CoA = a 3-oxoacyl-CoA + CoA. It functions in the pathway lipid metabolism; fatty acid beta-oxidation. Its function is as follows. Catalyzes the final step of fatty acid oxidation in which acetyl-CoA is released and the CoA ester of a fatty acid two carbons shorter is formed. The polypeptide is 3-ketoacyl-CoA thiolase (Aliivibrio salmonicida (strain LFI1238) (Vibrio salmonicida (strain LFI1238))).